A 219-amino-acid chain; its full sequence is Cytidylate kinase (219 aa).

An ATP-binding site is contributed by 15–23; that stretch reads GPAASGKGT.

Belongs to the cytidylate kinase family. Type 1 subfamily.

Its subcellular location is the cytoplasm. It catalyses the reaction CMP + ATP = CDP + ADP. The enzyme catalyses dCMP + ATP = dCDP + ADP. This chain is Cytidylate kinase, found in Brucella suis biovar 1 (strain 1330).